We begin with the raw amino-acid sequence, 161 residues long: MATFEGRFTDAQGLRIAVVVARFNDLVTGKLLSGCLDCLHRHGVDVTPESSQLDVAWVPGSFELPVAAQNLARSGRYQVLITLGAVIRGDTPHFDVVVAEASKGIAAVARDTGVPVIFGVLTTDTMQQALERAGIKSNLGWSYGLQALEMGSLMHALESEA.

Residues Phe-23, 61-63, and 85-87 contribute to the 5-amino-6-(D-ribitylamino)uracil site; these read SFE and AVI. (2S)-2-hydroxy-3-oxobutyl phosphate is bound at residue 90 to 91; sequence DT. Catalysis depends on His-93, which acts as the Proton donor. A 5-amino-6-(D-ribitylamino)uracil-binding site is contributed by Phe-118. Arg-132 serves as a coordination point for (2S)-2-hydroxy-3-oxobutyl phosphate.

Belongs to the DMRL synthase family.

It catalyses the reaction (2S)-2-hydroxy-3-oxobutyl phosphate + 5-amino-6-(D-ribitylamino)uracil = 6,7-dimethyl-8-(1-D-ribityl)lumazine + phosphate + 2 H2O + H(+). Its pathway is cofactor biosynthesis; riboflavin biosynthesis; riboflavin from 2-hydroxy-3-oxobutyl phosphate and 5-amino-6-(D-ribitylamino)uracil: step 1/2. In terms of biological role, catalyzes the formation of 6,7-dimethyl-8-ribityllumazine by condensation of 5-amino-6-(D-ribitylamino)uracil with 3,4-dihydroxy-2-butanone 4-phosphate. This is the penultimate step in the biosynthesis of riboflavin. In Synechococcus sp. (strain WH7803), this protein is 6,7-dimethyl-8-ribityllumazine synthase.